We begin with the raw amino-acid sequence, 862 residues long: DNA mismatch repair protein MutS (862 aa).

Residue 603 to 610 (GPNMSGKS) participates in ATP binding.

It belongs to the DNA mismatch repair MutS family.

In terms of biological role, this protein is involved in the repair of mismatches in DNA. It is possible that it carries out the mismatch recognition step. This protein has a weak ATPase activity. This is DNA mismatch repair protein MutS from Bacillus velezensis (strain DSM 23117 / BGSC 10A6 / LMG 26770 / FZB42) (Bacillus amyloliquefaciens subsp. plantarum).